The chain runs to 484 residues: Nuclear rim protein 1 (484 aa).

Residue Ser-3 is modified to Phosphoserine. Helical transmembrane passes span 145–165 and 252–272; these read FTIF…MFGY and TAIV…AIVF. Residues 416–458 are disordered; the sequence is SSNENLEKGGAFLPNQDQNRPSKSLSPLRKTPLSARQKRFEGS. At Ser-417 the chain carries Phosphoserine. Over residues 430–440 the composition is skewed to polar residues; sequence NQDQNRPSKSL. Residue Ser-474 is modified to Phosphoserine.

The protein belongs to the NUR1 family. Interacts with CSM1.

It is found in the nucleus membrane. In terms of biological role, member of a perinuclear network that controls recombination at multiple loci to maintain genome stability. Required for rDNA repeat stability. This chain is Nuclear rim protein 1 (NUR1), found in Saccharomyces cerevisiae (strain YJM789) (Baker's yeast).